We begin with the raw amino-acid sequence, 267 residues long: Lyso-ornithine lipid O-acyltransferase (267 aa).

A helical transmembrane segment spans residues 7–27; it reads IFLVVAAMVALSLSLIPFQYL.

The protein belongs to the 1-acyl-sn-glycerol-3-phosphate acyltransferase family. OlsA subfamily.

The protein localises to the membrane. It catalyses the reaction a lyso-ornithine lipid + a fatty acyl-[ACP] = an N(2)-[(3R)-3-(acyloxy)acyl]-L-ornithine lipid + holo-[ACP]. It functions in the pathway lipid metabolism. In terms of biological role, catalyzes the second step in the formation of ornithine lipids, which are phosphorus-free membrane lipids. Uses acyl-acyl carrier protein (acyl-AcpP) as an acyl donor and converts lyso-ornithine lipid (LOL) into ornithine lipid (OL). In Brucella abortus (strain 2308), this protein is Lyso-ornithine lipid O-acyltransferase.